We begin with the raw amino-acid sequence, 367 residues long: Molybdopterin synthase catalytic subunit (367 aa).

Residues 101 to 102 (HR), Lys117, and 124 to 126 (KKE) each bind substrate. Positions 325-350 (RHFTKREPSSMEAAPPKKSRKKSYSA) are disordered.

It belongs to the MoaE family. MOCS2B subfamily. As to quaternary structure, heterotetramer; composed of 2 small (Mocs2A) and 2 large (Mocs2B) subunits. Component of the Ada2a-containing (ATAC) complex composed of at least Ada2a, Atac1, Hcf, Ada3, Gcn5, Mocs2B, Charac-14, Atac3, Atac2, NC2beta and wds.

It localises to the cytoplasm. It is found in the nucleus. The enzyme catalyses 2 [molybdopterin-synthase sulfur-carrier protein]-C-terminal-Gly-aminoethanethioate + cyclic pyranopterin phosphate + H2O = molybdopterin + 2 [molybdopterin-synthase sulfur-carrier protein]-C-terminal Gly-Gly + 2 H(+). It participates in cofactor biosynthesis; molybdopterin biosynthesis. Catalytic subunit of the molybdopterin synthase complex, a complex that catalyzes the conversion of precursor Z into molybdopterin. Acts by mediating the incorporation of 2 sulfur atoms from thiocarboxylated Mocs2A into precursor Z to generate a dithiolene group. Involved during biosynthesis of the molybdenum cofactor. The chain is Molybdopterin synthase catalytic subunit from Drosophila melanogaster (Fruit fly).